The sequence spans 379 residues: DnaJ homolog subfamily B member 14 (379 aa).

Residues 1-244 (MEGNRDEAEK…GHEREEERGD (244 aa)) are Cytoplasmic-facing. The tract at residues 55–94 (STAGNSPHCRKPSGSGDQSKPNCTKDSTSGSGEGGKGYTK) is disordered. Residues 69–84 (SGDQSKPNCTKDSTSG) are compositionally biased toward polar residues. The J domain maps to 108–172 (NYYEVLGVTK…EKRKQYDLTG (65 aa)). The interval 219–241 (SNGRAGYSQQHQHRHSGHEREEE) is disordered. The helical transmembrane segment at 245–265 (GGFSVFIQLMPIIVLILVSLL) threads the bilayer. The Lumenal segment spans residues 266–379 (SQLMVSNPPY…ERLTSLYKGG (114 aa)).

It belongs to the DnaJ family. DNAJB12/DNAJB14 subfamily. In terms of assembly, interacts (via J domain) with HSPA8/Hsc70. Forms a multiprotein complex, at least composed of DNAJB12, DNAJB14, HSPA8/Hsc70 and SGTA; interaction with DNAJB14 and HSPA8/Hsc70 is direct.

The protein resides in the endoplasmic reticulum membrane. The protein localises to the nucleus membrane. Functionally, acts as a co-chaperone with HSPA8/Hsc70; required to promote protein folding and trafficking, prevent aggregation of client proteins, and promote unfolded proteins to endoplasmic reticulum-associated degradation (ERAD) pathway. Acts by determining HSPA8/Hsc70's ATPase and polypeptide-binding activities. Can also act independently of HSPA8/Hsc70: together with DNAJB12, acts as a chaperone that promotes maturation of potassium channels KCND2 and KCNH2 by stabilizing nascent channel subunits and assembling them into tetramers. While stabilization of nascent channel proteins is dependent on HSPA8/Hsc70, the process of oligomerization of channel subunits is independent of HSPA8/Hsc70. When overexpressed, forms membranous structures together with DNAJB12 and HSPA8/Hsc70 within the nucleus; the role of these structures, named DJANGOs, is still unclear. (Microbial infection) In case of infection by polyomavirus, involved in the virus endoplasmic reticulum membrane penetration and infection. This Homo sapiens (Human) protein is DnaJ homolog subfamily B member 14.